A 321-amino-acid chain; its full sequence is MYKMVDNLYNDIESDANIKEILTNAQDKLVILMFYSKGNPNSRRLLGHMEKIALNHCLSIFCVINMDKVQERDSRFFNNVTVPQFDFYYQTNRFATYTNLNTDKDIEQCVRMAEQYVVTQNNSRNNGQNNQSVNMFGSNSQMNTMNQINPMLVQQQILNNMQMTNPQMYTYLLQNPMTLNQLTQQQIQQMQQMQKQPMQSGMTNMINMPNVSNMIGMSNMNSIPNTIPQIPTNIATNQSSIPSIPSLSTNNNDPLPTMQQLEKWFKLFQMMSAMGILNTSATPIIPEQNQNQSNDEYEIEAVLPDGRKIYKLPDGRFGVCK.

This is an uncharacterized protein from Acanthamoeba polyphaga mimivirus (APMV).